The primary structure comprises 212 residues: Peptide methionine sulfoxide reductase MsrA (212 aa).

The active site involves C52.

Belongs to the MsrA Met sulfoxide reductase family.

The enzyme catalyses L-methionyl-[protein] + [thioredoxin]-disulfide + H2O = L-methionyl-(S)-S-oxide-[protein] + [thioredoxin]-dithiol. The catalysed reaction is [thioredoxin]-disulfide + L-methionine + H2O = L-methionine (S)-S-oxide + [thioredoxin]-dithiol. Its function is as follows. Has an important function as a repair enzyme for proteins that have been inactivated by oxidation. Catalyzes the reversible oxidation-reduction of methionine sulfoxide in proteins to methionine. In Salmonella arizonae (strain ATCC BAA-731 / CDC346-86 / RSK2980), this protein is Peptide methionine sulfoxide reductase MsrA.